Reading from the N-terminus, the 499-residue chain is Serine/threonine-protein phosphatase 5 (499 aa).

A disordered region spans residues Met1–Thr24. Ala2 carries the N-acetylalanine modification. TPR repeat units lie at residues Ala28–Asn61, Ala62–Tyr95, and Ile96–Asp129. The catalytic stretch occupies residues Gly184–Met499. 3 residues coordinate Mn(2+): Asp242, His244, and Asp271. Residue His244 coordinates substrate. Substrate contacts are provided by residues Arg275 and Asn303–His304. Asn303 contributes to the Mn(2+) binding site. Residue His304 is the Proton donor/acceptor of the active site. His352 contacts Mn(2+). Residues Arg400 and His427 each coordinate substrate. His427 provides a ligand contact to Mn(2+). The segment at Gln495–Met499 is required for autoinhibition.

It belongs to the PPP phosphatase family. PP-5 (PP-T) subfamily. Probably forms a complex composed of chaperones HSP90 and HSP70, co-chaperones STIP1/HOP, CDC37, PPP5C, PTGES3/p23, TSC1 and client protein TSC2. Probably forms a complex composed of chaperones HSP90 and HSP70, co-chaperones CDC37, PPP5C, TSC1 and client protein TSC2, CDK4, AKT, RAF1 and NR3C1; this complex does not contain co-chaperones STIP1/HOP and PTGES3/p23. Part of a complex with HSP90/HSP90AA1 and steroid receptors. Interacts (via TPR repeats) with HSP90AA1 (via TPR repeat-binding motif) or HSPA1A/HSPA1B; the interaction is direct and activates the phosphatase activity. Dissociates from HSPA1A/HSPA1B and HSP90AA1 in response to arachidonic acid. Interacts with CPNE1 (via VWFA domain). Interacts with CDC16, CDC27. Interacts with KLHDC10 (via the 6 Kelch repeats); inhibits the phosphatase activity on MAP3K5. Interacts with ATM and ATR; both interactions are induced by DNA damage and enhance ATM and ATR kinase activity. Interacts with RAD17; reduced by DNA damage. Interacts with nuclear receptors such as NR3C1/GCR and PPARG (activated by agonist); regulates their transactivation activities. Interacts (via TPR repeats) with S100 proteins S100A1, S100A2, S100A6, S100B and S100P; the interactions are calcium-dependent, strongly activate PPP5C phosphatase activity and compete with HSP90AA1 and MAP3K5 interactions. Interacts with SMAD2 and SMAD3 but not with SMAD1; decreases SMAD3 phosphorylation and protein levels. Interacts (via TPR repeats) with CRY1 and CRY2; the interaction with CRY2 down-regulates the phosphatase activity on CSNK1E. Interacts (via TPR repeats) with the active form of RAC1, GNA12 or GNA13; these interactions activate the phosphatase activity and translocate PPP5C to the cell membrane. Interacts with FLCN. Requires Mg(2+) as cofactor. Mn(2+) is required as a cofactor. Activated by at least two different proteolytic cleavages producing a 56 kDa and a 50 kDa form. Expressed in liver (at protein level) and brain, enriched in suprachiasmatic nuclei.

The protein resides in the nucleus. Its subcellular location is the cytoplasm. It is found in the cell membrane. The enzyme catalyses O-phospho-L-seryl-[protein] + H2O = L-seryl-[protein] + phosphate. The catalysed reaction is O-phospho-L-threonyl-[protein] + H2O = L-threonyl-[protein] + phosphate. With respect to regulation, autoinhibited. In the autoinhibited state, the TPR domain interacts with the catalytic region and prevents substrate access to the catalytic pocket. Allosterically activated by various polyunsaturated fatty acids, free long-chain fatty-acids and long-chain fatty acyl-CoA esters, arachidonic acid being the most effective activator. HSP90A and probably RAC1, GNA12 and GNA13 can also release the autoinhibition by the TPR repeat. Activation by RAC1, GNA12 and GNA13 is synergistic with the one produced by fatty acids binding. Inhibited by okadaic acid. Functionally, serine/threonine-protein phosphatase that dephosphorylates a myriad of proteins involved in different signaling pathways including the kinases CSNK1E, ASK1/MAP3K5, PRKDC and RAF1, the nuclear receptors NR3C1, PPARG, ESR1 and ESR2, SMAD proteins and TAU/MAPT. Implicated in wide ranging cellular processes, including apoptosis, differentiation, DNA damage response, cell survival, regulation of ion channels or circadian rhythms, in response to steroid and thyroid hormones, calcium, fatty acids, TGF-beta as well as oxidative and genotoxic stresses. Participates in the control of DNA damage response mechanisms such as checkpoint activation and DNA damage repair through, for instance, the regulation ATM/ATR-signaling and dephosphorylation of PRKDC and TP53BP1. Inhibits ASK1/MAP3K5-mediated apoptosis induced by oxidative stress. Plays a positive role in adipogenesis, mainly through the dephosphorylation and activation of PPARG transactivation function. Also dephosphorylates and inhibits the anti-adipogenic effect of NR3C1. Regulates the circadian rhythms, through the dephosphorylation and activation of CSNK1E. May modulate TGF-beta signaling pathway by the regulation of SMAD3 phosphorylation and protein expression levels. Dephosphorylates and may play a role in the regulation of TAU/MAPT. Through their dephosphorylation, may play a role in the regulation of ions channels such as KCNH2. Dephosphorylate FNIP1, disrupting interaction with HSP90AA1/Hsp90. This Mus musculus (Mouse) protein is Serine/threonine-protein phosphatase 5 (Ppp5c).